A 323-amino-acid chain; its full sequence is Ankyrin repeat and SOCS box protein 11 (323 aa).

ANK repeat units lie at residues 64 to 93 (ADRSPLHEAAAQGRLLALKTLIAQGINVNL), 97 to 126 (NRVSSLHEACLGGHVACAKALLENGAHVNA), 130 to 159 (HGATPLFNACCSGSAACVNVLLEFGAKAQL), 162 to 191 (YLASPIHEAVKRGHRECMEILLTKDVNIEQ), 195 to 224 (QLGTPLYVACTYQRVDCVKKLLELGASVDH), 227 to 256 (WLDTPLHAAVRQSSVEVINLLTVYGANLNL), and 260 to 289 (QGKSALDLAVPKSSVRQALLLHEGPPALSQ). The 51-residue stretch at 273–323 (SVRQALLLHEGPPALSQLCRLCVRKCLGRTCHHAIYALGLPESLEKFLLYQ) folds into the SOCS box domain.

Belongs to the ankyrin SOCS box (ASB) family. As to quaternary structure, substrate-recognition component of the ECS(ASB11) complex, composed of ASB11, CUL5, ELOB, ELOC and RNF7/RBX2.

The protein resides in the endoplasmic reticulum. The protein operates within protein modification; protein ubiquitination. Functionally, substrate-recognition component of a cullin-5-RING E3 ubiquitin-protein ligase complex (ECS complex, also named CRL5 complex), which mediates the ubiquitination and subsequent proteasomal degradation of target proteins, such as BIK, DIRAS2 and RPN1. The ECS(ASB11) complex acts as a regulator of the endoplasmic reticulum unfolded protein response by mediating ubiquitination and degradation of BIK. This is Ankyrin repeat and SOCS box protein 11 (Asb11) from Mus musculus (Mouse).